The following is a 402-amino-acid chain: uncharacterized protein (402 aa).

This sequence belongs to the peptidase M20 family.

This is an uncharacterized protein from Sinorhizobium fredii (strain NBRC 101917 / NGR234).